The chain runs to 536 residues: Pre-mRNA-splicing factor SLU7-B (536 aa).

Positions 1 to 42 are disordered; that stretch reads MATASVAFKSREDHRKKLELEEARKAGLAPAEVDEDGKEINP. Over residues 9-25 the composition is skewed to basic and acidic residues; that stretch reads KSREDHRKKLELEEARK. A CCHC-type zinc finger spans residues 96–109; that stretch reads CINCGAMTHSSKAC. 2 disordered regions span residues 176–201 and 488–507; these read LKKL…DLDD and KEDL…YNVN. Residues 187–200 show a composition bias toward acidic residues; that stretch reads NGDDATSDGEEDLD. The residue at position 193 (Ser193) is a Phosphoserine. The Nuclear localization signal signature appears at 486–493; sequence LKKEDLSR. Residues 488-501 are compositionally biased toward basic and acidic residues; the sequence is KEDLSRREEKDERK.

It belongs to the SLU7 family. In terms of assembly, interacts with PHYB in photobodies under red light.

It is found in the nucleus. In terms of biological role, participates in the second catalytic step of pre-mRNA splicing, when the free hydroxyl group of exon I attacks the 3'-splice site to generate spliced mRNA and the excised lariat intron. Splicing factor acting as a negative regulator of seedling photomorphogenesis by antagonizing PHYB signaling to promote light-induced hypocotyl elongation. Prevents the accumulation of functionally spliced RVE8a form, a circadian clock regulator mediating the transcriptional activation of clock genes containing evening elements (EE), but promotes PIF4 expression to fine-tune hypocotyl elongation in the light. Together with SMP1, involved in the timing of cell cycle arrest during leaf development, in a STRUWWELPETER (SWP) dependent manner; promotes cell proliferation in developing organs. This chain is Pre-mRNA-splicing factor SLU7-B, found in Arabidopsis thaliana (Mouse-ear cress).